A 189-amino-acid polypeptide reads, in one-letter code: Myb-like protein T (189 aa).

In terms of domain architecture, Myb-like spans 121-172 (NWSPDEQKALMVEVSTLGNKSEINWFFISQQLFLKGISRNARECQRKHESIQ).

In Dictyostelium discoideum (Social amoeba), this protein is Myb-like protein T (mybT).